The primary structure comprises 191 residues: Oleosin 20.3 kDa (191 aa).

At Ala-2 the chain carries N-acetylalanine. Positions 2 to 54 are polar; sequence ANVDRDRRVHVDRTDKRVHQPNYEDDVGFGGYGGYGAGSDYKSRGPSTNQILA. Helical transmembrane passes span 52–72 and 99–119; these read ILAL…AGLT and LTIG…LTGL. Residues 55–128 are hydrophobic; sequence LIAGVPIGGT…LSSVSWVLNY (74 aa).

The protein belongs to the oleosin family.

It is found in the lipid droplet. The protein localises to the membrane. Its function is as follows. May have a structural role to stabilize the lipid body during desiccation of the seed by preventing coalescence of the oil. Probably interacts with both lipid and phospholipid moieties of lipid bodies. May also provide recognition signals for specific lipase anchorage in lipolysis during seedling growth. This Arabidopsis thaliana (Mouse-ear cress) protein is Oleosin 20.3 kDa (OL2).